A 183-amino-acid chain; its full sequence is MNFTEIAEKLKQNQVVAYPTEAVFGLGCNPLSESAVKKLLDLKQRPIDKGLILIAPDLLYLLPFIDTERLNSRQISRLTANYSHPVTWVVPVKFGTPKFLTGRFNSIAVRISDHPAVAELCSLTGFALTSTSANLSGLPPCKTAAEVRSQFGQFFPVLDYPVGHAEKPSEIRNLLTDQLIREG.

The YrdC-like domain maps to 1 to 183; the sequence is MNFTEIAEKL…LLTDQLIREG (183 aa).

This sequence belongs to the SUA5 family. TsaC subfamily.

The protein resides in the cytoplasm. It catalyses the reaction L-threonine + hydrogencarbonate + ATP = L-threonylcarbamoyladenylate + diphosphate + H2O. Required for the formation of a threonylcarbamoyl group on adenosine at position 37 (t(6)A37) in tRNAs that read codons beginning with adenine. Catalyzes the conversion of L-threonine, HCO(3)(-)/CO(2) and ATP to give threonylcarbamoyl-AMP (TC-AMP) as the acyladenylate intermediate, with the release of diphosphate. The sequence is that of Threonylcarbamoyl-AMP synthase from Actinobacillus succinogenes (strain ATCC 55618 / DSM 22257 / CCUG 43843 / 130Z).